A 291-amino-acid chain; its full sequence is Flavonol synthase/flavanone 3-hydroxylase (291 aa).

The region spanning 151–250 is the Fe2OG dioxygenase domain; sequence CWYVMNINHY…RMSWPVLVSP (100 aa). Fe cation is bound by residues H175, D177, and H231.

Belongs to the iron/ascorbate-dependent oxidoreductase family. L-ascorbate serves as cofactor. Fe cation is required as a cofactor.

The protein resides in the cytoplasm. The enzyme catalyses a (2R,3R)-dihydroflavonol + 2-oxoglutarate + O2 = a flavonol + succinate + CO2 + H2O. It carries out the reaction a (2S)-flavan-4-one + 2-oxoglutarate + O2 = a (2R,3R)-dihydroflavonol + succinate + CO2. It functions in the pathway secondary metabolite biosynthesis; flavonoid biosynthesis. In terms of biological role, catalyzes the formation of flavonols from dihydroflavonols. It can act on dihydrokaempferol to produce kaempferol, on dihydroquercetin to produce quercitin and on dihydromyricetin to produce myricetin. This Matthiola incana (Common stock) protein is Flavonol synthase/flavanone 3-hydroxylase.